A 719-amino-acid chain; its full sequence is Phosphoribosylformylglycinamidine synthase subunit PurL (719 aa).

The active site involves histidine 47. 2 residues coordinate ATP: tyrosine 50 and lysine 89. A Mg(2+)-binding site is contributed by glutamate 91. Substrate-binding positions include 92 to 95 and arginine 114; that span reads SHNH. Histidine 93 serves as the catalytic Proton acceptor. Aspartate 115 serves as a coordination point for Mg(2+). A substrate-binding site is contributed by glutamine 238. Aspartate 266 provides a ligand contact to Mg(2+). A substrate-binding site is contributed by 310 to 312; the sequence is ESQ. ATP is bound by residues aspartate 488 and glycine 525. Asparagine 526 is a Mg(2+) binding site. Residue serine 528 participates in substrate binding.

It belongs to the FGAMS family. Monomer. Part of the FGAM synthase complex composed of 1 PurL, 1 PurQ and 2 PurS subunits.

Its subcellular location is the cytoplasm. It catalyses the reaction N(2)-formyl-N(1)-(5-phospho-beta-D-ribosyl)glycinamide + L-glutamine + ATP + H2O = 2-formamido-N(1)-(5-O-phospho-beta-D-ribosyl)acetamidine + L-glutamate + ADP + phosphate + H(+). Its pathway is purine metabolism; IMP biosynthesis via de novo pathway; 5-amino-1-(5-phospho-D-ribosyl)imidazole from N(2)-formyl-N(1)-(5-phospho-D-ribosyl)glycinamide: step 1/2. Functionally, part of the phosphoribosylformylglycinamidine synthase complex involved in the purines biosynthetic pathway. Catalyzes the ATP-dependent conversion of formylglycinamide ribonucleotide (FGAR) and glutamine to yield formylglycinamidine ribonucleotide (FGAM) and glutamate. The FGAM synthase complex is composed of three subunits. PurQ produces an ammonia molecule by converting glutamine to glutamate. PurL transfers the ammonia molecule to FGAR to form FGAM in an ATP-dependent manner. PurS interacts with PurQ and PurL and is thought to assist in the transfer of the ammonia molecule from PurQ to PurL. This Jannaschia sp. (strain CCS1) protein is Phosphoribosylformylglycinamidine synthase subunit PurL.